A 354-amino-acid polypeptide reads, in one-letter code: Homeobox protein Nkx-2.4 (354 aa).

Residues Arg-189–Ala-248 constitute a DNA-binding region (homeobox). Positions Arg-246 to Leu-329 are disordered. Over residues Gly-263 to Pro-272 the composition is skewed to pro residues.

This sequence belongs to the NK-2 homeobox family.

Its subcellular location is the nucleus. Functionally, probable transcription factor. The chain is Homeobox protein Nkx-2.4 (NKX2-4) from Homo sapiens (Human).